We begin with the raw amino-acid sequence, 45 residues long: Large ribosomal subunit protein bL34c (45 aa).

A disordered region spans residues 1 to 21; it reads MIQRTLTGTNRKKTKRSGFRS. Positions 10–19 are enriched in basic residues; the sequence is NRKKTKRSGF.

The protein belongs to the bacterial ribosomal protein bL34 family.

Its subcellular location is the plastid. The protein resides in the chloroplast. The sequence is that of Large ribosomal subunit protein bL34c (rpl34) from Cyanidium caldarium (Red alga).